The primary structure comprises 420 residues: LanC-like protein 3 (420 aa).

This sequence belongs to the LanC-like protein family.

The sequence is that of LanC-like protein 3 (LANCL3) from Homo sapiens (Human).